Reading from the N-terminus, the 650-residue chain is Threonine--tRNA ligase (650 aa).

Residues 5–67 form the TGS domain; it reads NKSMFIKLKD…QEGDQVILWG (63 aa). Residues 246–537 form a catalytic region; it reads DHKLLGAKLD…LIEHYVGKFP (292 aa). Cys337, His388, and His514 together coordinate Zn(2+).

Belongs to the class-II aminoacyl-tRNA synthetase family. As to quaternary structure, homodimer. Zn(2+) serves as cofactor.

The protein localises to the cytoplasm. The catalysed reaction is tRNA(Thr) + L-threonine + ATP = L-threonyl-tRNA(Thr) + AMP + diphosphate + H(+). Its function is as follows. Catalyzes the attachment of threonine to tRNA(Thr) in a two-step reaction: L-threonine is first activated by ATP to form Thr-AMP and then transferred to the acceptor end of tRNA(Thr). Also edits incorrectly charged L-seryl-tRNA(Thr). This is Threonine--tRNA ligase from Protochlamydia amoebophila (strain UWE25).